The chain runs to 125 residues: Snaclec botrocetin subunit beta (125 aa).

3 cysteine pairs are disulfide-bonded: cysteine 2–cysteine 13, cysteine 30–cysteine 121, and cysteine 98–cysteine 113. Residues 9–122 (YEGHCYRFFK…CTRFKNFVCE (114 aa)) form the C-type lectin domain.

The protein belongs to the snaclec family. Heterodimer of subunits alpha and beta; disulfide-linked. Botrocetin and vWF form a soluble complex. In terms of tissue distribution, expressed by the venom gland.

The protein resides in the secreted. Snaclec that binds to von Willebrand factor (VWF) and induces its interaction with GPIbalpha (GP1BA) (via the vWF A1 domain), resulting in platelet aggregation. This chain is Snaclec botrocetin subunit beta, found in Bothrops jararaca (Jararaca).